A 713-amino-acid chain; its full sequence is Low-density lipoprotein receptor-related protein 10 (713 aa).

The signal sequence occupies residues 1 to 17 (MLSALPLLFLLLGGALA). Residues 18-441 (RPDRITFPRS…WDCSYALPRK (424 aa)) lie on the Extracellular side of the membrane. 2 cysteine pairs are disulfide-bonded: cysteine 29/cysteine 58 and cysteine 81/cysteine 99. A CUB 1 domain is found at 29-137 (CEAPPAVLSE…QGFLLTYSQD (109 aa)). An N-linked (GlcNAc...) asparagine glycan is attached at asparagine 57. The N-linked (GlcNAc...) asparagine glycan is linked to asparagine 112. The LDL-receptor class A 1 domain occupies 140 to 176 (LCLQEEFQCLNHRCIPAAQRCDGIDACGDGSDEAGCS). 4 disulfide bridges follow: cysteine 141–cysteine 153, cysteine 148–cysteine 166, cysteine 160–cysteine 175, and cysteine 193–cysteine 221. The region spanning 193 to 306 (CNLTLEDFYG…RGFNATYHVR (114 aa)) is the CUB 2 domain. Asparagine 194 and asparagine 300 each carry an N-linked (GlcNAc...) asparagine glycan. LDL-receptor class A domains follow at residues 308–355 (YCLP…EGCP), 356–398 (GCPP…RRCR), and 399–435 (HCQPGNFRCRDEKCVYETWVCDGQPDCTDGSDEWDCS). Cystine bridges form between cysteine 309-cysteine 332, cysteine 316-cysteine 345, cysteine 339-cysteine 354, cysteine 357-cysteine 375, cysteine 364-cysteine 388, cysteine 382-cysteine 397, cysteine 400-cysteine 412, cysteine 407-cysteine 425, and cysteine 419-cysteine 434. A helical membrane pass occupies residues 442 to 462 (VITAAVIGSLVCGLLLVIALG). Residues 463–713 (CTCKLYAIRT…VEAEDEPLLA (251 aa)) lie on the Cytoplasmic side of the membrane. The disordered stretch occupies residues 566 to 636 (LLPRTNTPAR…TLPALATVSE (71 aa)). At threonine 596 the chain carries Phosphothreonine. The span at 614-626 (PPLPIKTPIPTPS) shows a compositional bias: pro residues.

It belongs to the LDLR family. In terms of tissue distribution, highly expressed in heart, lung, liver and liver. Expressed at low level in brain and spleen. Weakly or not expressed in testis and skeletal muscle. In liver, it is expressed in hepatocytes and at higher level in sinusoidal lining. In the kidney, it is expressed in peritubular capillaries. In brain, it is expressed in the epithelium of the choroid plexus ependymal cells of the third ventricle pia matter, and to lesser extent in hippocampal fields CA2 and CA3.

The protein localises to the membrane. Its subcellular location is the coated pit. Its function is as follows. Probable receptor, which is involved in the internalization of lipophilic molecules and/or signal transduction. May be involved in the uptake of lipoprotein APOE in liver. This Mus musculus (Mouse) protein is Low-density lipoprotein receptor-related protein 10 (Lrp10).